The following is a 135-amino-acid chain: Large ribosomal subunit protein uL16c (135 aa).

Belongs to the universal ribosomal protein uL16 family. Part of the 50S ribosomal subunit.

It localises to the plastid. The protein localises to the chloroplast. This is Large ribosomal subunit protein uL16c from Aethionema cordifolium (Lebanon stonecress).